The following is a 355-amino-acid chain: MSKSTSTPNPQNEKLKALQLTIDKLEKTYGKGTVMKLSDEVVMDVPVISTGSLGLDIALGIGGLPKGRIVEIYGPESSGKTTLSMHCIAEAQKAGGIAAFIDAEHAFDKTYAEKLGIDTTNLLISQPDNGEQALEIAEHLIRSGAIDIIVIDSVAALVPKAEIEGEMGDSKMGLQARLMSQALRKLTGAINKTGCCCIFINQLREKIGVMFGNPETTTGGNALKFYASVRLDIRRIGQIKESADNITGNRTKVKVVKNKMAPPFKVIEFDIMYGEGISKIGEIIDLGVELGIINKAGSWFSYEGTKLGQGRDAVRTVFLDNPEMQDEIELKIRQKVQLSGVPAAMEAKELEEEEA.

Position 74-81 (74-81 (GPESSGKT)) interacts with ATP.

This sequence belongs to the RecA family.

The protein resides in the cytoplasm. Functionally, can catalyze the hydrolysis of ATP in the presence of single-stranded DNA, the ATP-dependent uptake of single-stranded DNA by duplex DNA, and the ATP-dependent hybridization of homologous single-stranded DNAs. It interacts with LexA causing its activation and leading to its autocatalytic cleavage. The protein is Protein RecA of Cytophaga hutchinsonii (strain ATCC 33406 / DSM 1761 / CIP 103989 / NBRC 15051 / NCIMB 9469 / D465).